Here is a 488-residue protein sequence, read N- to C-terminus: WD repeat-containing protein slp1 (488 aa).

Disordered stretches follow at residues 1–29 (MEIA…PNSP) and 74–93 (CGSP…FIPS). The span at 7–17 (SSTISPTFSTP) shows a compositional bias: low complexity. WD repeat units follow at residues 178–215 (IDDY…VSAL), 219–258 (DEST…KLRT), 261–298 (GHQA…HQIG), 302–341 (GHSS…PKFT), 344–386 (NHNA…RVNT), 388–429 (DAGS…LTKQ), and 434–473 (AHDT…HVKR).

Belongs to the WD repeat CDC20/Fizzy family. In terms of assembly, interacts with cdc13, mad3 and mes1.

Its function is as follows. Required for mad2-dependent spindle checkpoint activation. Promotes ubiquitin-dependent degradation of cdc13 by the anaphase promoting complex/cyclosome (APC/C). This Schizosaccharomyces pombe (strain 972 / ATCC 24843) (Fission yeast) protein is WD repeat-containing protein slp1 (slp1).